Here is a 98-residue protein sequence, read N- to C-terminus: NADH-ubiquinone oxidoreductase chain 4L (98 aa).

Transmembrane regions (helical) follow at residues 1 to 21 (MTPV…GLAF), 29 to 49 (ALLC…LWAL), and 58 to 78 (VAPM…LALL).

It belongs to the complex I subunit 4L family.

The protein localises to the mitochondrion membrane. The catalysed reaction is a ubiquinone + NADH + 5 H(+)(in) = a ubiquinol + NAD(+) + 4 H(+)(out). In terms of biological role, core subunit of the mitochondrial membrane respiratory chain NADH dehydrogenase (Complex I) which catalyzes electron transfer from NADH through the respiratory chain, using ubiquinone as an electron acceptor. Part of the enzyme membrane arm which is embedded in the lipid bilayer and involved in proton translocation. This is NADH-ubiquinone oxidoreductase chain 4L (MT-ND4L) from Oncorhynchus clarkii (Cutthroat trout).